Consider the following 653-residue polypeptide: Endoglin (653 aa).

A signal peptide spans 1–24; that stretch reads MDRGVLPQAIALLLAVCSFGPTAG. At 25 to 581 the chain is on the extracellular side; it reads LAEGVQCDLQ…IVSPGLPDKG (557 aa). Residues 27–44 form an OR1, N-terminal part region; it reads EGVQCDLQPVDPKVTYTT. The segment at 27 to 336 is required for interaction with GDF2; sequence EGVQCDLQPV…RSCGSGLQPS (310 aa). 7 disulfide bridges follow: Cys31–Cys206, Cys51–Cys181, Cys241–Cys329, Cys349–Cys381, Cys362–Cys442, Cys393–Cys411, and Cys493–Cys549. The OR2 stretch occupies residues 45–198; the sequence is SQVSEGCVAH…MGHTLEWKSH (154 aa). Asn57 carries an N-linked (GlcNAc...) asparagine glycan. Residues 199–329 are OR1, C-terminal part; the sequence is TQASVLGCHL…SVISLQDRSC (131 aa). The tract at residues 269–281 is essential for interaction with GDF2; it reads KAWTTGEYSFKIF. A glycan (N-linked (GlcNAc...) asparagine) is linked at Asn306. A ZP domain is found at 362–512; it reads CSDDVMTLVL…MVDLIQNQEA (151 aa). A helical membrane pass occupies residues 582–606; sequence LVLPAVLGITFGAFLIGALLTAALW. Residues 607–653 are Cytoplasmic-facing; that stretch reads YIHSHTRHPGKREPVVAVAAPASSESSSTNHSIGSTQSTPCSTSSMA. Positions 625–634 are enriched in low complexity; sequence AAPASSESSS. The tract at residues 625–653 is disordered; it reads AAPASSESSSTNHSIGSTQSTPCSTSSMA. Residues 635-653 show a composition bias toward polar residues; sequence TNHSIGSTQSTPCSTSSMA. 2 positions are modified to phosphoserine; by TGFBR1: Ser641 and Ser644.

As to quaternary structure, homodimer; disulfide-linked. Forms a heteromeric complex with the signaling receptors for transforming growth factor-beta: TGFBR1 and/or TGFBR2. It is able to bind TGFB1 and TGFB2 with high affinity, but not TGFB3. Interacts with GDF2, forming a heterotetramer with a 2:2 stoichiometry. Interacts with ACVRL1. Can form a heteromeric complex with GDF2 and ACVRL1. Interacts with BMP10. Interacts with DYNLT4. Interacts with ARRB2.

Its subcellular location is the cell membrane. Functionally, vascular endothelium glycoprotein that plays an important role in the regulation of angiogenesis. Required for normal structure and integrity of adult vasculature. Regulates the migration of vascular endothelial cells. Required for normal extraembryonic angiogenesis and for embryonic heart development. May regulate endothelial cell shape changes in response to blood flow, which drive vascular remodeling and establishment of normal vascular morphology during angiogenesis. May play a role in the binding of endothelial cells to integrins. Acts as a TGF-beta coreceptor and is involved in the TGF-beta/BMP signaling cascade that ultimately leads to the activation of SMAD transcription factors. Required for GDF2/BMP9 signaling through SMAD1 in endothelial cells and modulates TGFB1 signaling through SMAD3. The polypeptide is Endoglin (ENG) (Sus scrofa (Pig)).